Consider the following 62-residue polypeptide: UPF0370 protein plu2724 (62 aa).

Residues 3–23 (WLADYWWIILILLVGVLLNAI) form a helical membrane-spanning segment. Positions 36 to 62 (DNKPELPPHRDLNSKWDDEDDWPQKKP) are disordered.

Belongs to the UPF0370 family.

The protein localises to the cell membrane. The sequence is that of UPF0370 protein plu2724 from Photorhabdus laumondii subsp. laumondii (strain DSM 15139 / CIP 105565 / TT01) (Photorhabdus luminescens subsp. laumondii).